A 270-amino-acid chain; its full sequence is 3-methyl-2-oxobutanoate hydroxymethyltransferase (270 aa).

Mg(2+)-binding residues include Asp-41 and Asp-80. Residues 41–42, Asp-80, and Lys-109 contribute to the 3-methyl-2-oxobutanoate site; that span reads DS. Glu-111 provides a ligand contact to Mg(2+). Glu-178 (proton acceptor) is an active-site residue.

The protein belongs to the PanB family. In terms of assembly, homodecamer; pentamer of dimers. Mg(2+) serves as cofactor.

It localises to the cytoplasm. It catalyses the reaction 3-methyl-2-oxobutanoate + (6R)-5,10-methylene-5,6,7,8-tetrahydrofolate + H2O = 2-dehydropantoate + (6S)-5,6,7,8-tetrahydrofolate. Its pathway is cofactor biosynthesis; (R)-pantothenate biosynthesis; (R)-pantoate from 3-methyl-2-oxobutanoate: step 1/2. Catalyzes the reversible reaction in which hydroxymethyl group from 5,10-methylenetetrahydrofolate is transferred onto alpha-ketoisovalerate to form ketopantoate. This is 3-methyl-2-oxobutanoate hydroxymethyltransferase from Thermotoga neapolitana (strain ATCC 49049 / DSM 4359 / NBRC 107923 / NS-E).